The primary structure comprises 349 residues: Nicotinate-nucleotide--dimethylbenzimidazole phosphoribosyltransferase (349 aa).

Glu-318 acts as the Proton acceptor in catalysis.

This sequence belongs to the CobT family.

The enzyme catalyses 5,6-dimethylbenzimidazole + nicotinate beta-D-ribonucleotide = alpha-ribazole 5'-phosphate + nicotinate + H(+). It functions in the pathway nucleoside biosynthesis; alpha-ribazole biosynthesis; alpha-ribazole from 5,6-dimethylbenzimidazole: step 1/2. Catalyzes the synthesis of alpha-ribazole-5'-phosphate from nicotinate mononucleotide (NAMN) and 5,6-dimethylbenzimidazole (DMB). This Geobacter sp. (strain M21) protein is Nicotinate-nucleotide--dimethylbenzimidazole phosphoribosyltransferase.